The chain runs to 93 residues: Large ribosomal subunit protein uL23cz/uL23cy (93 aa).

Belongs to the universal ribosomal protein uL23 family. In terms of assembly, part of the 50S ribosomal subunit.

It localises to the plastid. It is found in the chloroplast. Binds to 23S rRNA. The chain is Large ribosomal subunit protein uL23cz/uL23cy (rpl23-A) from Nymphaea alba (White water-lily).